The chain runs to 1052 residues: RIMS-binding protein 2 (1052 aa).

Residues 115-164 (GEYIRPLPQPGDRPEPLSAKPTFLSRSGSARCRSESDMENERNSNTSKQR) are disordered. A compositionally biased stretch (basic and acidic residues) spans 146–156 (CRSESDMENER). Positions 167–234 (GKVHLCVARY…PSNFVDFVQD (68 aa)) constitute an SH3 1 domain. 3 consecutive Fibronectin type-III domains span residues 297–390 (VPYP…GKDV), 393–475 (APSH…KKEA), and 489–590 (PPQD…VPPT). 5 disordered regions span residues 584–615 (ELLV…DEHL), 629–666 (RAPG…PVST), 697–716 (SAGQ…PDFK), 767–787 (EMQL…NALK), and 805–829 (FPRG…YGRD). Residues 585–598 (LLVPPTPHPRPAPQ) are compositionally biased toward pro residues. Positions 645–654 (PGRRSPSPSR) are enriched in low complexity. Phosphoserine occurs at positions 704 and 712. Phosphoserine occurs at positions 832 and 839. Thr841 is modified (phosphothreonine). 2 consecutive SH3 domains span residues 848 to 916 (LPAR…EIQA) and 952 to 1019 (VSTR…EVPD). Residues 1029–1052 (PSHYSQDTPMRSKAKRKKSVHFTP) are disordered. Residues 1040–1052 (SKAKRKKSVHFTP) are compositionally biased toward basic residues.

Belongs to the RIMBP family. In terms of assembly, interacts with RIMS1, RIMS2, CACNA1D and CACNA1B, and potentially with other Ca(2+) channel alpha-1 isoforms.

The protein resides in the cell membrane. Its subcellular location is the synapse. Plays a role in the synaptic transmission as bifunctional linker that interacts simultaneously with RIMS1, RIMS2, CACNA1D and CACNA1B. This chain is RIMS-binding protein 2 (RIMBP2), found in Homo sapiens (Human).